Here is an 848-residue protein sequence, read N- to C-terminus: Neurofilament medium polypeptide (848 aa).

A compositionally biased stretch (polar residues) spans 1 to 10 (MSYTLDSLGN). A disordered region spans residues 1 to 51 (MSYTLDSLGNPSAYRRVTETRSSFSRVSGSPSSGFRSQSWSRGSPSTVSSS). Residue serine 2 is modified to N-acetylserine. The tract at residues 2 to 102 (SYTLDSLGNP…KLSRSNEKEQ (101 aa)) is head. Over residues 21–44 (RSSFSRVSGSPSSGFRSQSWSRGS) the composition is skewed to low complexity. At serine 30 the chain carries Phosphoserine. The residue at position 42 (arginine 42) is an Omega-N-methylarginine. An O-linked (GlcNAc) threonine glycan is attached at threonine 47. Serine 97 bears the Phosphoserine mark. In terms of domain architecture, IF rod spans 99–410 (EKEQLQGLND…KLLEGEETRF (312 aa)). A coil 1A region spans residues 103–134 (LQGLNDRFAGYIEKVHYLEQQNKEIEAEIQAL). Positions 135–147 (RQKQASHAQLGDA) are linker 1. Positions 148–246 (YDQEIRELRA…EEEVADLLAQ (99 aa)) are coil 1B. Serine 224 is subject to Phosphoserine. The linker 12 stretch occupies residues 247 to 263 (IQASHITVERKDYLKTD). Positions 264-285 (ISTALKEIRSQLECHSDQNMHQ) are coil 2A. Positions 286-289 (AEEW) are linker 2. Positions 290–410 (FKCRYAKLTE…KLLEGEETRF (121 aa)) are coil 2B. Tyrosine 318 is subject to Phosphotyrosine. Serine 344, serine 416, and serine 428 each carry phosphoserine. Residues 411–848 (STFSGSITGP…AIVKEVTQGD (438 aa)) form a tail region. Threonine 430 carries an O-linked (GlcNAc) threonine glycan. Phosphoserine is present on residues serine 466 and serine 482. The segment at 482-785 (SAKEEKEEAE…GEDSSDDKVV (304 aa)) is disordered. Acidic residues predominate over residues 488 to 498 (EEAEEKEEEPE). Basic and acidic residues predominate over residues 499-509 (AEKSPVKSPEA). 2 positions are modified to phosphoserine: serine 502 and serine 506. The segment covering 510-533 (KEEEEEGEKEEEEEGQEEEEEEDE) has biased composition (acidic residues). Positions 534–553 (GVKSDQAEEGGSEKEGSSEK) are enriched in basic and acidic residues. Phosphoserine occurs at positions 537, 545, 550, and 551. Over residues 554–576 (DEGEQEEEEGETEAEGEGEEAEA) the composition is skewed to acidic residues. The residue at position 565 (threonine 565) is a Phosphothreonine. Over residues 577-604 (KEEKKIEGKVEEVAVKEEIKVEKPEKAK) the composition is skewed to basic and acidic residues. A phosphoserine mark is found at serine 605 and serine 610. 2 stretches are compositionally biased toward basic and acidic residues: residues 611–677 (PVEE…KAVE) and 689–711 (SLEK…KAEE). Threonine 642 carries the post-translational modification Phosphothreonine. 7 positions are modified to phosphoserine: serine 645, serine 669, serine 689, serine 715, serine 723, serine 753, and serine 769. Basic and acidic residues-rich tracts occupy residues 720-732 (SDRS…KEDI) and 748-760 (TQEK…EEKG). Residues 771-785 (AEEKKGEDSSDDKVV) are compositionally biased toward basic and acidic residues.

The protein belongs to the intermediate filament family. Forms heterodimers with NEFL; which can further hetero-oligomerize (in vitro). Forms heterodimers with INA (in vitro). In terms of processing, there are a number of repeats of the tripeptide K-S-P, NFM is phosphorylated on a number of the serines in this motif. It is thought that phosphorylation of NFM results in the formation of interfilament cross bridges that are important in the maintenance of axonal caliber. Post-translationally, phosphorylation seems to play a major role in the functioning of the larger neurofilament polypeptides (NF-M and NF-H), the levels of phosphorylation being altered developmentally and coincidentally with a change in the neurofilament function. Phosphorylated in the head and rod regions by the PKC kinase PKN1, leading to the inhibition of polymerization. In terms of tissue distribution, expressed in the sciatic nerve (at protein level).

It localises to the cytoplasm. The protein resides in the cytoskeleton. Its subcellular location is the cell projection. The protein localises to the axon. In terms of biological role, neurofilaments usually contain three intermediate filament proteins: NEFL, NEFM, and NEFH which are involved in the maintenance of neuronal caliber. May additionally cooperate with the neuronal intermediate filament proteins PRPH and INA to form neuronal filamentous networks. In Mus musculus (Mouse), this protein is Neurofilament medium polypeptide (Nefm).